Here is a 471-residue protein sequence, read N- to C-terminus: P2X purinoceptor 2 (471 aa).

Residues 1–42 are Cytoplasmic-facing; it reads MAAAQPKYPAGATARRLARGCWSALWDYETPKVIVVRNRRLG. Intrachain disulfides connect Cys21-Cys439, Cys125-Cys176, Cys136-Cys159, Cys142-Cys170, Cys226-Cys236, and Cys270-Cys279. A helical membrane pass occupies residues 43–63; it reads VLYRAVQLLILLYFVWYVFIV. Residues 64-337 lie on the Extracellular side of the membrane; the sequence is QKSYQESETG…IVHGQAGKFS (274 aa). Residues Lys81 and Lys83 each contribute to the ATP site. N-linked (GlcNAc...) asparagine glycosylation occurs at Asn133. N-linked (GlcNAc...) asparagine glycosylation occurs at Asn194. Thr196 is an ATP binding site. The ATP site is built by Ser296, Asn300, and Arg302. The N-linked (GlcNAc...) asparagine glycan is linked to Asn310. Lys319 serves as a coordination point for ATP. Residues 320–333 are pore-forming motif; it reads AYGIRIDVIVHGQA. A helical transmembrane segment spans residues 338–358; sequence LIPTIINLATALTSVGVGSFL. Residues 359–471 are Cytoplasmic-facing; sequence CDWILLTFMN…PTDPKGLAQL (113 aa). The segment at 400-471 is disordered; the sequence is GQAPPEPGHR…PTDPKGLAQL (72 aa).

This sequence belongs to the P2X receptor family. As to quaternary structure, homotrimer and heterotrimer; functional P2XRs are organized as homomeric and heteromeric trimers. Homotrimer. Forms heterotrimer with P2RX1. Forms heterotrimer with P2RX6. Forms heterotrimer with P2RX3. As to expression, expressed in both the central and peripheral nervous system, as well as in the pituitary gland.

It is found in the cell membrane. It catalyses the reaction Ca(2+)(in) = Ca(2+)(out). The catalysed reaction is K(+)(in) = K(+)(out). It carries out the reaction Na(+)(in) = Na(+)(out). Fast activation by external ATP. Exhibits slow desensitization during prolonged ATP activation. Not sensitive to the ATP agonist:alpha/beta-methylene-ATP. ATP-gated nonselective transmembrane cation channel permeable to potassium, sodium and calcium. Activation by extracellular ATP induces a variety of cellular responses, such as excitatory postsynaptic responses in sensory neurons, neuromuscular junctions (NMJ) formation, hearing, perception of taste and peristalsis. In the inner ear, regulates sound transduction and auditory neurotransmission, outer hair cell electromotility, inner ear gap junctions, and K(+) recycling. Mediates synaptic transmission between neurons and from neurons to smooth muscle. In Homo sapiens (Human), this protein is P2X purinoceptor 2.